The sequence spans 59 residues: MGQQHQFRPGQKAPNNGVYVEIGETGSMVKNPQKVHLSAGEMFPETSNHNRLWTYKRKP.

This is an uncharacterized protein from Bacillus subtilis (strain 168).